The primary structure comprises 1537 residues: MPARSAPPPPALPPALRRRLRDLERDEDSLSEKETLQEKLRLTRGFLRAEVQRRLSALDADVRCRELSEERYLAKVKALLRRELAAENGDAAKLFSRASNGCAGNGEEEWERGGRGEDGAMEVEEAAASSSSSSSSSSSSSSSSSSSSSLLPAPRARKARRSRSNGESKKSPASSRVTRSSGRQPTILSVFSKGSTKRKSEEVNGAVKPEVSAEKDEEEEEELEEKEQDEKRIKIETKEGSEIKDEITQVKTSTPAKTTPPKCVDCRQYLDDPDLKFFQGDPDDALEEPEMLTDERLSIFDANEDGFESYEDLPQHKVTSFSVYDKRGHLCPFDTGLIERNIELYFSGAVKPIYDDNPCLDGGVRAKKLGPINAWWITGFDGGEKALIGFTTAFADYILMEPSEEYAPIFALMQEKIYMSKIVVEFLQNNRDVSYEDLLNKIETTVPPVGLNFNRFTEDSLLRHAQFVVEQVESYDEAGDSDEPPVLITPCMRDLIKLAGVTLGKRRAVRRQAIRHPTRIDKDKGPTKATTTKLVYLIFDTFFSEQIEKDEREDDKENAMKRRRCGVCEVCQQPECGKCKACQNMVKFGGSGRSKQACLQRRCPNLAVREADEDEEVDDNIPEMPSPKKMLQGRKKKQNKSRISWVGEPIKSDGKKDFYQRVCIDSETLEVGDCVSVSPDDPTKPLYLARVTAMWEDSSGQMFHAHWFCPGSDTVLGATSDPLELFLVDECEDMQLSYIHGKVNVIYKPPSENWAMEGGLDMEIKMVEDDGRTYFYQMWYDQEYARFETPPRAQPMEDNKYKFCLSCARLDEVRHKEIPKVAEPLDEGDGKMFYAMATKNGVQYRVGDSVYLLPEAFSFSMKPASPAKRPKKEAVDEDLYPEHYRKYSEYIKGSNLDAPDPYRVGRIKEIFCHIRTNGKPNEADIKLRIWKFYRPENTHKSMKATYHADINLLYWSDEETTVDFCAVQGRCTVVYGEDLTESIQDYSAGGLDRFYFLEAYNAKTKSFEDPPNHARSSGNKGKGKGKGKGKGKGKSSTTCEQSEPEPTELKLPKLRTLDVFSGCGGLSEGFHQAGVSETLWAIEMWEPAAQAFRLNNPGTTVFTEDCNVLLKLVMSGEKTNSLGQKLPQKGDVEMLCGGPPCQGFSGMNRFNSRTYSKFKNSLVVSFLSYCDYYRPRFFLLENVRNFVSFKRSMVLKLTLRCLVRMGYQCTFGVLQAGQYGVAQTRRRAIVLAAAPGEKLPMFPEPLHVFAPRACQLSVVVDDKKFVSNITRTYSGPFRTITVRDTMSDLPEIRNGASALEISYNGEPQSWFQRQIRGSQYQPILRDHICKDMSALVAARMRHIPLAPGSDWRDLPNIEVRLSDGTSTRKLRYTHHEKKNGRSSSGALRGVCSCAEGKPCDPADRQFNTLIPWCLPHTGNRHNHWAGLYGRLEWDGFFSTTVTNPEPMGKQGRVLHPEQHRVVSVRECARSQGFPDTYRLFGNILDKHRQVGNAVPPPLAKAIGLEIRACVGARMREESGAAVAPPAPEKMEMTAAAD.

Residues 1–13 (MPARSAPPPPALP) are compositionally biased toward pro residues. 2 disordered regions span residues 1–34 (MPAR…SEKE) and 97–232 (RASN…DEKR). Residues 8-105 (PPPALPPALR…SRASNGCAGN (98 aa)) enclose the DMAP1-binding domain. Residues 21 to 34 (RDLERDEDSLSEKE) are compositionally biased toward basic and acidic residues. A compositionally biased stretch (low complexity) spans 129 to 154 (SSSSSSSSSSSSSSSSSSSSSLLPAP). Polar residues predominate over residues 171-194 (SPASSRVTRSSGRQPTILSVFSKG). Residues 182-194 (GRQPTILSVFSKG) form an interaction with PCNA region. Over residues 215 to 227 (KDEEEEEELEEKE) the composition is skewed to acidic residues. Residues cysteine 263, cysteine 266, and histidine 329 each coordinate Zn(2+). A Phosphoserine modification is found at serine 420. The segment at 558–604 (NAMKRRRCGVCEVCQQPECGKCKACQNMVKFGGSGRSKQACLQRRCP) adopts a CXXC-type zinc-finger fold. The Zn(2+) site is built by cysteine 565, cysteine 568, cysteine 571, cysteine 576, cysteine 579, cysteine 582, cysteine 598, and cysteine 603. Residues 614-638 (DEEVDDNIPEMPSPKKMLQGRKKKQ) form a disordered region. BAH domains lie at 667 to 791 (ETLE…ETPP) and 883 to 1011 (HYRK…EDPP). Residues 1006–1050 (SFEDPPNHARSSGNKGKGKGKGKGKGKGKSSTTCEQSEPEPTELK) are disordered. Tandem repeats lie at residues 1020–1021 (KG), 1022–1023 (KG), 1024–1025 (KG), 1026–1027 (KG), 1028–1029 (KG), 1030–1031 (KG), and 1032–1033 (KG). The segment at 1020 to 1035 (KGKGKGKGKGKGKGKS) is 8 X 2 AA tandem repeats of K-G. The segment covering 1021-1033 (GKGKGKGKGKGKG) has biased composition (basic residues). Residues 1034–1035 (KS) form an 8; approximate repeat. Residues 1054-1513 (LRTLDVFSGC…LEIRACVGAR (460 aa)) form the SAM-dependent MTase C5-type domain. Residues serine 1061, 1065–1066 (GL), 1083–1084 (EM), 1105–1106 (DC), and cysteine 1106 contribute to the S-adenosyl-L-methionine site. The active site involves cysteine 1141. The S-adenosyl-L-methionine site is built by asparagine 1492 and valine 1494. The segment at 1518-1537 (SGAAVAPPAPEKMEMTAAAD) is disordered.

The protein belongs to the class I-like SAM-binding methyltransferase superfamily. C5-methyltransferase family. As to quaternary structure, homodimer. Interacts with PCNA. Testis and lung.

The protein localises to the nucleus. The enzyme catalyses a 2'-deoxycytidine in DNA + S-adenosyl-L-methionine = a 5-methyl-2'-deoxycytidine in DNA + S-adenosyl-L-homocysteine + H(+). Methylates CpG residues. Preferentially methylates hemimethylated DNA. It is responsible for maintaining methylation patterns established in development. Mediates transcriptional repression by direct binding to HDAC2. Plays a role in promoter hypermethylation and transcriptional silencing of tumor suppressor genes (TSGs) or other tumor-related genes. Also required to maintain a transcriptionally repressive state of genes in undifferentiated embryonic stem cells (ESCs). Associates at promoter regions of tumor suppressor genes (TSGs) leading to their gene silencing. This Gallus gallus (Chicken) protein is DNA (cytosine-5)-methyltransferase 1 (DNMT1).